A 624-amino-acid chain; its full sequence is DNA (cytosine-5)-methyltransferase DRM1 (624 aa).

UBA domains follow at residues 57–100 (RISD…LFNY) and 108–149 (SSKS…LLTY). The disordered stretch occupies residues 160-189 (DMNININDDDDDNLYSLSSDDEEDELNNSS). The span at 166-185 (NDDDDDNLYSLSSDDEEDEL) shows a compositional bias: acidic residues. Residues 188–231 (SSNEDRILQALIKMGYLREDAAIAIERCGEDASMEEVVDFICAA) enclose the UBA 3 domain. The region spanning 291–622 (MHRPVPIPDI…EAVRRKARHM (332 aa)) is the SAM-dependent MTase DRM-type domain.

It belongs to the class I-like SAM-binding methyltransferase superfamily. DRM-methyltransferase family.

Its subcellular location is the nucleus. The enzyme catalyses a 2'-deoxycytidine in DNA + S-adenosyl-L-methionine = a 5-methyl-2'-deoxycytidine in DNA + S-adenosyl-L-homocysteine + H(+). Its function is as follows. Involved in de novo DNA methylation. Controls asymmetric and CpNpG methylation. Required for FWA gene silencing but not for the maintenance of SUP gene silencing. Functionally redundant to CMT3 to maintain non-CpG methylation. Involved in RNA-directed DNA methylation. The sequence is that of DNA (cytosine-5)-methyltransferase DRM1 (DRM1) from Arabidopsis thaliana (Mouse-ear cress).